Reading from the N-terminus, the 343-residue chain is Twinfilin (343 aa).

ADF-H domains follow at residues 4–139 (QTGI…KHKI) and 177–312 (GINC…EELH). Residues 317 to 343 (NLRPQFSKPKGPPSRGAKRLTKPQAVE) form a disordered region.

Belongs to the actin-binding proteins ADF family. Twinfilin subfamily. As to quaternary structure, interacts with G-actin; ADP-actin form.

The protein localises to the cytoplasm. Its subcellular location is the cytoskeleton. It localises to the cell cortex. Actin-binding protein involved in motile and morphological processes. Inhibits actin polymerization, likely by sequestering G-actin. This chain is Twinfilin (twf), found in Aedes aegypti (Yellowfever mosquito).